We begin with the raw amino-acid sequence, 250 residues long: Large ribosomal subunit protein uL30B (250 aa).

Belongs to the universal ribosomal protein uL30 family. As to quaternary structure, component of the large ribosomal subunit (LSU). Mature yeast ribosomes consist of a small (40S) and a large (60S) subunit. The 40S small subunit contains 1 molecule of ribosomal RNA (18S rRNA) and at least 33 different proteins. The large 60S subunit contains 3 rRNA molecules (25S, 5.8S and 5S rRNA) and at least 46 different proteins.

Its subcellular location is the cytoplasm. The protein resides in the nucleus. It localises to the nucleolus. Its function is as follows. Component of the ribosome, a large ribonucleoprotein complex responsible for the synthesis of proteins in the cell. The small ribosomal subunit (SSU) binds messenger RNAs (mRNAs) and translates the encoded message by selecting cognate aminoacyl-transfer RNA (tRNA) molecules. The large subunit (LSU) contains the ribosomal catalytic site termed the peptidyl transferase center (PTC), which catalyzes the formation of peptide bonds, thereby polymerizing the amino acids delivered by tRNAs into a polypeptide chain. The nascent polypeptides leave the ribosome through a tunnel in the LSU and interact with protein factors that function in enzymatic processing, targeting, and the membrane insertion of nascent chains at the exit of the ribosomal tunnel. In Schizosaccharomyces pombe (strain 972 / ATCC 24843) (Fission yeast), this protein is Large ribosomal subunit protein uL30B (rpl702).